The sequence spans 609 residues: Membrane protein insertase YidC (609 aa).

The chain crosses the membrane as a helical span at residues 9–29 (IIAIVLSGLILIAWQYFYNIP). A disordered region spans residues 35-63 (RAAQQAQSQTAKSPTEPTPNSPKPDHPAA). Helical transmembrane passes span 375–395 (VFGN…AIFF), 449–469 (LPMV…FVTI), 507–527 (LLGP…TMWF), and 546–566 (WMPV…VIYW).

The protein belongs to the OXA1/ALB3/YidC family. Type 1 subfamily. Interacts with the Sec translocase complex via SecD. Specifically interacts with transmembrane segments of nascent integral membrane proteins during membrane integration.

The protein resides in the cell inner membrane. Its function is as follows. Required for the insertion and/or proper folding and/or complex formation of integral membrane proteins into the membrane. Involved in integration of membrane proteins that insert both dependently and independently of the Sec translocase complex, as well as at least some lipoproteins. Aids folding of multispanning membrane proteins. This chain is Membrane protein insertase YidC, found in Nitrobacter hamburgensis (strain DSM 10229 / NCIMB 13809 / X14).